We begin with the raw amino-acid sequence, 193 residues long: Phosphoheptose isomerase (193 aa).

The 157-residue stretch at 37-193 (IAQSFKNEKK…LIIEKEMQKN (157 aa)) folds into the SIS domain. 52-54 (NGG) provides a ligand contact to substrate. Residues His61 and Glu65 each coordinate Zn(2+). Substrate is bound by residues Glu65, 93–94 (ND), 119–121 (STS), Ser124, and Gln172. Residues Gln172 and His180 each coordinate Zn(2+).

It belongs to the SIS family. GmhA subfamily. As to quaternary structure, homotetramer. The cofactor is Zn(2+).

Its subcellular location is the cytoplasm. It carries out the reaction 2 D-sedoheptulose 7-phosphate = D-glycero-alpha-D-manno-heptose 7-phosphate + D-glycero-beta-D-manno-heptose 7-phosphate. It functions in the pathway carbohydrate biosynthesis; D-glycero-D-manno-heptose 7-phosphate biosynthesis; D-glycero-alpha-D-manno-heptose 7-phosphate and D-glycero-beta-D-manno-heptose 7-phosphate from sedoheptulose 7-phosphate: step 1/1. Its function is as follows. Catalyzes the isomerization of sedoheptulose 7-phosphate in D-glycero-D-manno-heptose 7-phosphate. The protein is Phosphoheptose isomerase of Buchnera aphidicola subsp. Acyrthosiphon pisum (strain 5A).